We begin with the raw amino-acid sequence, 242 residues long: Small ribosomal subunit protein eS1 (242 aa).

It belongs to the eukaryotic ribosomal protein eS1 family. In terms of assembly, component of the small ribosomal subunit. Mature ribosomes consist of a small (40S) and a large (60S) subunit. The 40S subunit contains about 33 different proteins and 1 molecule of RNA (18S). The 60S subunit contains about 49 different proteins and 3 molecules of RNA (25S, 5.8S and 5S).

It localises to the cytoplasm. This chain is Small ribosomal subunit protein eS1, found in Lodderomyces elongisporus (strain ATCC 11503 / CBS 2605 / JCM 1781 / NBRC 1676 / NRRL YB-4239) (Yeast).